The following is a 547-amino-acid chain: Sesquiterpene synthase TPS3 (547 aa).

R265, D302, D306, R443, and D446 together coordinate (2E,6E)-farnesyl diphosphate. Residues D302 and D306 each coordinate Mg(2+). The DDXXD motif motif lies at 302 to 306 (DDIYD). Mg(2+)-binding residues include D446, T450, and E454.

Belongs to the terpene synthase family. Tpsb subfamily. In terms of assembly, monomer. The cofactor is Mg(2+).

The protein resides in the cytoplasm. The catalysed reaction is (2E,6E)-farnesyl diphosphate = (1S,5S,6R)-alpha-bergamotene + diphosphate. Its pathway is secondary metabolite biosynthesis; terpenoid biosynthesis. Functionally, sesquiterpene synthase involved in the biosynthesis of volatile organic compounds. Mediates the conversion of (2E,6E)-farnesyl diphosphate (FPP) into alpha-bergamotene. Does not use (2E)-geranyl diphosphate (GPP) as substrate. In Cananga odorata (Ylang-ylang tree), this protein is Sesquiterpene synthase TPS3.